We begin with the raw amino-acid sequence, 351 residues long: Ion-translocating oxidoreductase complex subunit D (351 aa).

Transmembrane regions (helical) follow at residues I20–G40, L44–L64, L89–A109, and P123–L143. Position 187 is an FMN phosphoryl threonine (T187). 5 consecutive transmembrane segments (helical) span residues L215 to L235, I244 to P264, F267 to A287, L301 to P321, and D322 to T342.

The protein belongs to the NqrB/RnfD family. In terms of assembly, the complex is composed of six subunits: RnfA, RnfB, RnfC, RnfD, RnfE and RnfG. It depends on FMN as a cofactor.

It is found in the cell inner membrane. Its function is as follows. Part of a membrane-bound complex that couples electron transfer with translocation of ions across the membrane. The chain is Ion-translocating oxidoreductase complex subunit D from Pectobacterium carotovorum subsp. carotovorum (strain PC1).